The sequence spans 292 residues: Ribosomal protein L11 methyltransferase (292 aa).

T144, G165, D187, and N229 together coordinate S-adenosyl-L-methionine.

The protein belongs to the methyltransferase superfamily. PrmA family.

It localises to the cytoplasm. It carries out the reaction L-lysyl-[protein] + 3 S-adenosyl-L-methionine = N(6),N(6),N(6)-trimethyl-L-lysyl-[protein] + 3 S-adenosyl-L-homocysteine + 3 H(+). Its function is as follows. Methylates ribosomal protein L11. The sequence is that of Ribosomal protein L11 methyltransferase from Saccharophagus degradans (strain 2-40 / ATCC 43961 / DSM 17024).